We begin with the raw amino-acid sequence, 553 residues long: Hydroxylamine reductase (553 aa).

4 residues coordinate [2Fe-2S] cluster: Cys3, Cys6, Cys18, and Cys25. 8 residues coordinate hybrid [4Fe-2O-2S] cluster: His249, Glu273, Cys317, Cys405, Cys433, Cys459, Glu493, and Lys495. A Cysteine persulfide modification is found at Cys405.

The protein belongs to the HCP family. [2Fe-2S] cluster is required as a cofactor. Requires hybrid [4Fe-2O-2S] cluster as cofactor.

The protein localises to the cytoplasm. It catalyses the reaction A + NH4(+) + H2O = hydroxylamine + AH2 + H(+). Functionally, catalyzes the reduction of hydroxylamine to form NH(3) and H(2)O. This is Hydroxylamine reductase from Actinobacillus succinogenes (strain ATCC 55618 / DSM 22257 / CCUG 43843 / 130Z).